A 75-amino-acid chain; its full sequence is Putative membrane protein insertion efficiency factor 2 (75 aa).

The protein belongs to the UPF0161 family.

The protein resides in the cell membrane. In terms of biological role, could be involved in insertion of integral membrane proteins into the membrane. The protein is Putative membrane protein insertion efficiency factor 2 of Bacillus licheniformis (strain ATCC 14580 / DSM 13 / JCM 2505 / CCUG 7422 / NBRC 12200 / NCIMB 9375 / NCTC 10341 / NRRL NRS-1264 / Gibson 46).